Here is a 185-residue protein sequence, read N- to C-terminus: Elongation factor P (185 aa).

Belongs to the elongation factor P family.

It is found in the cytoplasm. It participates in protein biosynthesis; polypeptide chain elongation. Its function is as follows. Involved in peptide bond synthesis. Stimulates efficient translation and peptide-bond synthesis on native or reconstituted 70S ribosomes in vitro. Probably functions indirectly by altering the affinity of the ribosome for aminoacyl-tRNA, thus increasing their reactivity as acceptors for peptidyl transferase. The chain is Elongation factor P from Pelotomaculum thermopropionicum (strain DSM 13744 / JCM 10971 / SI).